A 166-amino-acid polypeptide reads, in one-letter code: Tegument protein UL55 homolog (166 aa).

Belongs to the alphaherpesvirinae HHV-1 UL55 family.

Its subcellular location is the virion tegument. It localises to the host nucleus matrix. This chain is Tegument protein UL55 homolog (MDV070), found in Gallid herpesvirus 2 (strain Chicken/Md5/ATCC VR-987) (GaHV-2).